Reading from the N-terminus, the 1171-residue chain is ATP-dependent helicase/deoxyribonuclease subunit B (1171 aa).

Residues Met1–Ala390 enclose the UvrD-like helicase ATP-binding domain. An ATP-binding site is contributed by Gly8–Ser15. The 307-residue stretch at Met281 to Asp587 folds into the UvrD-like helicase C-terminal domain. [4Fe-4S] cluster-binding residues include Cys805, Cys1129, Cys1132, and Cys1138.

This sequence belongs to the helicase family. AddB/RexB type 1 subfamily. Heterodimer of AddA and AddB. Mg(2+) is required as a cofactor. It depends on [4Fe-4S] cluster as a cofactor.

The heterodimer acts as both an ATP-dependent DNA helicase and an ATP-dependent, dual-direction single-stranded exonuclease. Recognizes the chi site generating a DNA molecule suitable for the initiation of homologous recombination. The AddB subunit has 5' -&gt; 3' nuclease activity but not helicase activity. The chain is ATP-dependent helicase/deoxyribonuclease subunit B from Bacillus cereus (strain ZK / E33L).